Consider the following 235-residue polypeptide: Thiopurine S-methyltransferase (235 aa).

Residues Trp13, Leu48, Glu69, and Arg126 each contribute to the S-adenosyl-L-methionine site. Positions 199-235 (PDPQNGAPRRVEHKVYQLTGKRPASPEADGRAAETED) are disordered. Residues 226–235 (ADGRAAETED) are compositionally biased toward basic and acidic residues.

Belongs to the class I-like SAM-binding methyltransferase superfamily. TPMT family.

Its subcellular location is the cytoplasm. The catalysed reaction is S-adenosyl-L-methionine + a thiopurine = S-adenosyl-L-homocysteine + a thiopurine S-methylether.. The sequence is that of Thiopurine S-methyltransferase from Stutzerimonas stutzeri (strain A1501) (Pseudomonas stutzeri).